The chain runs to 101 residues: Small ribosomal subunit protein uS14 (101 aa).

Belongs to the universal ribosomal protein uS14 family. In terms of assembly, part of the 30S ribosomal subunit. Contacts proteins S3 and S10.

Functionally, binds 16S rRNA, required for the assembly of 30S particles and may also be responsible for determining the conformation of the 16S rRNA at the A site. This Alcanivorax borkumensis (strain ATCC 700651 / DSM 11573 / NCIMB 13689 / SK2) protein is Small ribosomal subunit protein uS14.